The following is a 109-amino-acid chain: Keratin, type II microfibrillar (109 aa).

The interval 1 to 10 is linker 1; sequence QNRQCCESNL. One can recognise an IF rod domain in the interval 1–109; sequence QNRQCCESNL…RLYEEEIRVL (109 aa). The coil 1B stretch occupies residues 11 to 109; that stretch reads EPLFSGYIET…RLYEEEIRVL (99 aa).

The protein belongs to the intermediate filament family.

Its function is as follows. Wool microfibrillar keratin. In Ovis aries (Sheep), this protein is Keratin, type II microfibrillar.